The chain runs to 286 residues: MLISELLQTPLGIFFVGLFSLMVGSFLNVVIYRVPVMMDREEKQYAWQVFHGEDSVCPEIPKQRFNLLVPASRCPHCGHRIRAIENIPVISWLFLKGKCSGCGAAISARYLLVELLTAALSVIVAFHYHDPLSLGFALVFTWTLIALCFIDAEHQLLPDRLTLPLLWLGILAALFNVFINLESSVIGAMIGYLSLWSVYWLFKLITGREGMGYGDFKLLACLCAWQGAWMLPIILFSAAILGMIYALGIGLRMGKPMPFGPFLAIAGWLTFLYGAQIGQLFGYFPA.

The helical transmembrane segment at 11–31 (LGIFFVGLFSLMVGSFLNVVI) threads the bilayer. Residues Cys74, Cys77, Cys99, and Cys102 each coordinate Zn(2+). Helical transmembrane passes span 106–126 (ISARYLLVELLTAALSVIVAF), 132–152 (LSLGFALVFTWTLIALCFIDA), 161–181 (LTLPLLWLGILAALFNVFINL), 185–205 (VIGAMIGYLSLWSVYWLFKLI), 231–251 (LPIILFSAAILGMIYALGIGL), and 257–277 (MPFGPFLAIAGWLTFLYGAQI).

This sequence belongs to the peptidase A24 family. Zn(2+) serves as cofactor.

It is found in the cell inner membrane. It catalyses the reaction Typically cleaves a -Gly-|-Phe- bond to release an N-terminal, basic peptide of 5-8 residues from type IV prepilin, and then N-methylates the new N-terminal amino group, the methyl donor being S-adenosyl-L-methionine.. Its function is as follows. Plays an essential role in type IV pili and type II pseudopili formation by proteolytically removing the leader sequence from substrate proteins and subsequently monomethylating the alpha-amino group of the newly exposed N-terminal phenylalanine. This Dichelobacter nodosus (Bacteroides nodosus) protein is Prepilin leader peptidase/N-methyltransferase (fimP).